The primary structure comprises 342 residues: Apurinic-apyrimidinic endonuclease 1 (342 aa).

Residues H61, E136, D170, H173, H207, D220, H222, and E252 each coordinate Zn(2+). Residues 299 to 310 (HLNKFEKKEAKK) show a composition bias toward basic and acidic residues. Positions 299-342 (HLNKFEKKEAKKDRKKKSKDGDQTTLLLRKKQKLGNAEVKSLDE) are disordered.

The protein belongs to the AP endonuclease 2 family. Zn(2+) is required as a cofactor.

Its subcellular location is the nucleus. Functionally, DNA repair enzyme that cleaves apurinic/apyrimidinic (AP) sites and removes 3'-blocking groups present at single strand breaks of damaged DNA. Provides back-up AP endonuclease (APE) activity to apn2 together with uve1. In Schizosaccharomyces pombe (strain 972 / ATCC 24843) (Fission yeast), this protein is Apurinic-apyrimidinic endonuclease 1 (apn1).